The chain runs to 281 residues: MRVVHTINELRQALAATRPAALVPTMGSLHEGHLALVKQARDHGGPVVASIFVNRLQFAPHEDFDRYPRTLERDCDLLKGVGCNLVFAPTESELYPEPQTYKVQPPGELADVLEGAFRPGFFTGVCTVVMKLFQCVQPRVAVFGKKDYQQLMVLRGMVRQFALPIEIVAVDTARADDGLALSSRNAYLSEPERAEAPQLAATLHTVQAAVLAAVKSGARIDAAALEAQAMGTLRSRGWAPDYVALRRSSDLQAPADPTAEPLVVLAAARLGKTRLIDNLEI.

26-33 (MGSLHEGH) contacts ATP. H33 acts as the Proton donor in catalysis. Q57 is a (R)-pantoate binding site. Q57 contributes to the beta-alanine binding site. ATP is bound at residue 144–147 (GKKD). Q150 contacts (R)-pantoate. ATP contacts are provided by residues A173 and 181–184 (LSSR).

The protein belongs to the pantothenate synthetase family. Homodimer.

Its subcellular location is the cytoplasm. The enzyme catalyses (R)-pantoate + beta-alanine + ATP = (R)-pantothenate + AMP + diphosphate + H(+). It participates in cofactor biosynthesis; (R)-pantothenate biosynthesis; (R)-pantothenate from (R)-pantoate and beta-alanine: step 1/1. Its function is as follows. Catalyzes the condensation of pantoate with beta-alanine in an ATP-dependent reaction via a pantoyl-adenylate intermediate. In Methylibium petroleiphilum (strain ATCC BAA-1232 / LMG 22953 / PM1), this protein is Pantothenate synthetase.